The sequence spans 662 residues: MSQLLLFTILVFSSVFVIGSLSFIPPPHPFDPLTEIELNLVRNIINERYPIGLEHRFTFQYVGLNEPDKSLVLSWVSSQYHNVKSPPRQAFVIARDHGKTREIVVDFASQAIVSEKIHVGNGYPMLTIDEQQATSELVLKFKPFRDSIRRRGLNVSEVVVTTSTMGWFGEAKPERLIKKRPFYLNGSVNTYLRPIEGMTIIVNLDQMKVTKFRDRFTSPLPNAKGTEFRISKLKPPFGPSLQNAVLFQSEGPGFKIDGHTNRWANWEFHMSFDVRAGLVISLASIFDMDVNKYRQVLYKGHLSEIFVPYMDPSEDWYFRTFFDCGEFGCGQYAVSLEPYTDCPGNAAFMDGVFASQDGTPIKITNVMCIFEKYAGDIMWRHTEIEIPGLKVRPDVSLVVRMVTTVGNYDYIVDYEFKPSGSIKIGVGLTGVLEVKPVKYVNTSEIKEDDIHGTIVADNTIGVNHDHFVTYRLDLDIDGTDNSFVRSELVTKRTPKSVNTPRKSYWTTKRLKAEELLVVNPSRKTKHGNEVGYRLLHGPASEGPLLAQDDYPQIRAAFTNYNVWITPYNNTEVWASGLYADRSQGDDTLAVWSQRNRKIEKTDIVMWYTVGFHHVPCQEDFPTMPTLFGGFELRPTNFFEQNPDLKTKPIKLNTTPTCTARND.

A signal peptide spans 1 to 22 (MSQLLLFTILVFSSVFVIGSLS). Asn-154 carries N-linked (GlcNAc...) asparagine glycosylation. 321 to 332 (FFDCGEFGCGQY) is a substrate binding site. Asp-323 acts as the Proton acceptor in catalysis. The cysteines at positions 342 and 368 are disulfide-linked. 405 to 410 (VGNYDY) contacts substrate. Residue Tyr-408 is the Schiff-base intermediate with substrate; via topaquinone of the active site. Tyr-408 carries the post-translational modification 2',4',5'-topaquinone. His-464 and His-466 together coordinate Cu cation. 2 residues coordinate Mn(2+): Asp-473 and Asp-475. An N-linked (GlcNAc...) asparagine glycan is attached at Asn-568. Mn(2+) contacts are provided by Asp-602 and Ile-603. His-613 provides a ligand contact to Cu cation.

It belongs to the copper/topaquinone oxidase family. As to quaternary structure, homodimer. Requires Cu cation as cofactor. It depends on Mn(2+) as a cofactor. L-topaquinone is required as a cofactor. Post-translationally, topaquinone (TPQ) is generated by copper-dependent autoxidation of a specific tyrosyl residue.

It carries out the reaction a primary methyl amine + O2 + H2O = an aldehyde + H2O2 + NH4(+). This Arabidopsis thaliana (Mouse-ear cress) protein is Primary amine oxidase 2.